Reading from the N-terminus, the 61-residue chain is Large ribosomal subunit protein uL30 (61 aa).

This sequence belongs to the universal ribosomal protein uL30 family. Part of the 50S ribosomal subunit.

In Shewanella piezotolerans (strain WP3 / JCM 13877), this protein is Large ribosomal subunit protein uL30.